The chain runs to 401 residues: Acetate kinase (401 aa).

A Mg(2+)-binding site is contributed by Asn-9. Position 16 (Lys-16) interacts with ATP. Arg-88 lines the substrate pocket. The active-site Proton donor/acceptor is the Asp-147. Residues 207–211, 282–284, and 333–337 each bind ATP; these read HLGNG, DCR, and GIGEN. Glu-388 lines the Mg(2+) pocket.

This sequence belongs to the acetokinase family. In terms of assembly, homodimer. Requires Mg(2+) as cofactor. Mn(2+) serves as cofactor.

It is found in the cytoplasm. It catalyses the reaction acetate + ATP = acetyl phosphate + ADP. It functions in the pathway metabolic intermediate biosynthesis; acetyl-CoA biosynthesis; acetyl-CoA from acetate: step 1/2. In terms of biological role, catalyzes the formation of acetyl phosphate from acetate and ATP. Can also catalyze the reverse reaction. The polypeptide is Acetate kinase (Haemophilus influenzae (strain PittEE)).